The primary structure comprises 64 residues: Prokaryotic ubiquitin-like protein Pup (64 aa).

The interval 1–37 (MAQEQTKRGGGGGDDEDVTGTTAAGQERREKLAQDTD) is disordered. An ARC ATPase binding region spans residues 21 to 58 (TTAAGQERREKLAQDTDDLLDEIDDVLEENAEDFVRAY). Residues 25-52 (GQERREKLAQDTDDLLDEIDDVLEENAE) adopt a coiled-coil conformation. At Gln64 the chain carries Deamidated glutamine. Residue Gln64 forms an Isoglutamyl lysine isopeptide (Gln-Lys) (interchain with K-? in acceptor proteins) linkage.

This sequence belongs to the prokaryotic ubiquitin-like protein family. Strongly interacts with the proteasome-associated ATPase ARC through a hydrophobic interface; the interacting region of Pup lies in its C-terminal half. There is one Pup binding site per ARC hexamer ring. Is modified by deamidation of its C-terminal glutamine to glutamate by the deamidase Dop, a prerequisite to the subsequent pupylation process.

It participates in protein degradation; proteasomal Pup-dependent pathway. In terms of biological role, protein modifier that is covalently attached to lysine residues of substrate proteins, thereby targeting them for proteasomal degradation. The tagging system is termed pupylation. This is Prokaryotic ubiquitin-like protein Pup from Mycobacterium marinum (strain ATCC BAA-535 / M).